The primary structure comprises 310 residues: Glycine-rich RNA-binding protein RZ1C (310 aa).

The RRM domain occupies 7–85 (SRIFVGGLSP…RVISVNRAEP (79 aa)). Ser-15 is modified (phosphoserine). Positions 82-120 (RAEPKLGRDDGESHGSRGGRDSGYSIAGKGSFGGGGGGG) are disordered. Over residues 83–101 (AEPKLGRDDGESHGSRGGR) the composition is skewed to basic and acidic residues. Residues 111 to 120 (GSFGGGGGGG) are compositionally biased toward gly residues. The CCHC-type zinc-finger motif lies at 128-143 (CFKCGRVGHWARDCPS). Residues 224 to 310 (RFAGGDRYSR…YPSSSTFDRY (87 aa)) form a disordered region. Composition is skewed to basic and acidic residues over residues 226–236 (AGGDRYSRGSD) and 244–253 (DKARSFERDI). Gly residues predominate over residues 261 to 273 (RYGGGRAGGPIRG). Ser-295 bears the Phosphoserine mark.

Expressed in roots, rosette and cauline leaves, stems, floral buds and flowers.

It localises to the nucleus. Its function is as follows. Binds RNA and DNA sequences non-specifically. May be involved in tolerance to cold stress. This chain is Glycine-rich RNA-binding protein RZ1C, found in Arabidopsis thaliana (Mouse-ear cress).